The chain runs to 313 residues: Ribosomal RNA small subunit methyltransferase H (313 aa).

S-adenosyl-L-methionine is bound by residues 33 to 35 (GGH), D53, F80, D101, and Q108. Residues 282–313 (LVHNKPLTPSEAEIEQNPRARSAKLRVAQKLA) are disordered.

Belongs to the methyltransferase superfamily. RsmH family.

It is found in the cytoplasm. The catalysed reaction is cytidine(1402) in 16S rRNA + S-adenosyl-L-methionine = N(4)-methylcytidine(1402) in 16S rRNA + S-adenosyl-L-homocysteine + H(+). Specifically methylates the N4 position of cytidine in position 1402 (C1402) of 16S rRNA. In Magnetococcus marinus (strain ATCC BAA-1437 / JCM 17883 / MC-1), this protein is Ribosomal RNA small subunit methyltransferase H.